A 487-amino-acid chain; its full sequence is Berbamunine synthase (487 aa).

Residue Cys-429 coordinates heme.

Belongs to the cytochrome P450 family. Heme serves as cofactor.

It is found in the endoplasmic reticulum membrane. The protein resides in the microsome membrane. It catalyses the reaction (R)-N-methylcoclaurine + (S)-N-methylcoclaurine + reduced [NADPH--hemoprotein reductase] + O2 = berbamunine + oxidized [NADPH--hemoprotein reductase] + 2 H2O + H(+). It functions in the pathway alkaloid biosynthesis; berbamunine biosynthesis; berbamunine from (R)-N-methylcoclaurine and (S)-N-methylcoclaurine: step 1/1. Its function is as follows. Forms the bisbenzylisoquinoline alkaloid berbamunine by phenol oxidation of N-methylcoclaurine without the incorporation of oxygen into the product. Oxidatively couples either two molecules of (R)-N-methylcoclaurine to form the (R,R) dimer guattegaumerine or one molecule each of (R)- and (S)-N-methylcoclaurine to form the (R,S) dimer berbamunine. This Berberis stolonifera (Barberry) protein is Berbamunine synthase (CYP80A1).